Consider the following 173-residue polypeptide: NADH-ubiquinone oxidoreductase chain 6 (173 aa).

The next 5 membrane-spanning stretches (helical) occupy residues 1–21, 27–47, 48–68, 91–111, and 141–161; these read MTYF…AVAS, YGVV…LSLG, VSFV…VVFV, GVGF…IGCL, and VGMF…VLEL.

The protein belongs to the complex I subunit 6 family.

The protein localises to the mitochondrion membrane. It catalyses the reaction a ubiquinone + NADH + 5 H(+)(in) = a ubiquinol + NAD(+) + 4 H(+)(out). Core subunit of the mitochondrial membrane respiratory chain NADH dehydrogenase (Complex I) that is believed to belong to the minimal assembly required for catalysis. Complex I functions in the transfer of electrons from NADH to the respiratory chain. The immediate electron acceptor for the enzyme is believed to be ubiquinone. The polypeptide is NADH-ubiquinone oxidoreductase chain 6 (MT-ND6) (Fratercula arctica (Atlantic puffin)).